An 88-amino-acid polypeptide reads, in one-letter code: U13-theraphotoxin-Cg1a (88 aa).

The N-terminal stretch at 1 to 21 (MKVSVLITLAVLGVMFVWASA) is a signal peptide. Residues 22–52 (AELEQSGSDQKDSDSPAWLKSMERIFQSEER) constitute a propeptide that is removed on maturation. 3 cysteine pairs are disulfide-bonded: Cys-54/Cys-68, Cys-61/Cys-73, and Cys-67/Cys-80.

Belongs to the neurotoxin 10 (Hwtx-1) family. 41 (Jztx-36) subfamily. In terms of tissue distribution, expressed by the venom gland.

The protein localises to the secreted. Functionally, probable ion channel inhibitor. The protein is U13-theraphotoxin-Cg1a of Chilobrachys guangxiensis (Chinese earth tiger tarantula).